Here is a 411-residue protein sequence, read N- to C-terminus: LL-diaminopimelate aminotransferase (411 aa).

Tyrosine 15 and glycine 42 together coordinate substrate. Pyridoxal 5'-phosphate contacts are provided by residues tyrosine 72, 108 to 109 (SK), tyrosine 132, asparagine 187, tyrosine 218, and 246 to 248 (SFS). Residues lysine 109, tyrosine 132, and asparagine 187 each contribute to the substrate site. Lysine 249 is modified (N6-(pyridoxal phosphate)lysine). Pyridoxal 5'-phosphate is bound by residues arginine 257 and asparagine 292. Substrate is bound by residues asparagine 292 and arginine 388.

It belongs to the class-I pyridoxal-phosphate-dependent aminotransferase family. LL-diaminopimelate aminotransferase subfamily. In terms of assembly, homodimer. Requires pyridoxal 5'-phosphate as cofactor.

The catalysed reaction is (2S,6S)-2,6-diaminopimelate + 2-oxoglutarate = (S)-2,3,4,5-tetrahydrodipicolinate + L-glutamate + H2O + H(+). The protein operates within amino-acid biosynthesis; L-lysine biosynthesis via DAP pathway; LL-2,6-diaminopimelate from (S)-tetrahydrodipicolinate (aminotransferase route): step 1/1. Its function is as follows. Involved in the synthesis of meso-diaminopimelate (m-DAP or DL-DAP), required for both lysine and peptidoglycan biosynthesis. Catalyzes the direct conversion of tetrahydrodipicolinate to LL-diaminopimelate. This is LL-diaminopimelate aminotransferase from Citrifermentans bemidjiense (strain ATCC BAA-1014 / DSM 16622 / JCM 12645 / Bem) (Geobacter bemidjiensis).